The primary structure comprises 211 residues: Suppressor of cytokine signaling 1 (211 aa).

The segment at 1-53 is disordered; sequence MVAHNQVAADNAVSTAAEPRRRPEPSSSSSSSPAAPARPRPCPAVPAPAPGDT. Positions 25–35 are enriched in low complexity; that stretch reads PSSSSSSSPAA. The segment covering 36–49 has biased composition (pro residues); that stretch reads PARPRPCPAVPAPA. The kinase inhibitory region (KIR) stretch occupies residues 55-66; the sequence is FRTFRSHADYRR. Residues 67 to 78 form an extended SH2 subdomain (ESS) region; it reads ITRASALLDACG. Positions 79–174 constitute an SH2 domain; that stretch reads FYWGPLSVHG…PLRQRRVRPL (96 aa). One can recognise an SOCS box domain in the interval 161–210; it reads MLGAPLRQRRVRPLQELCRQRIVATVGRENLARIPLNPVLRDYLSSFPFQ. The tract at residues 173–182 is interaction with Elongin BC complex; the sequence is PLQELCRQRI.

It belongs to the SOCS1 family. Interacts with multiple activated signaling proteins of the tyrosine kinase signaling pathway including JAK family kinases, TEC, KIT, GRB2 and VAV. Binding to JAKs is mediated through the KIR and SH2 domains to a phosphorylated tyrosine residue within the JAK JH1 domain. Binds the SH3 domain of GRB2 via diproline determinants in the N-terminus, and the N-terminal regulatory domain of VAV. Interacts with the Elongin BC complex (ELOB and ELOC). Component of an ECS CBC(SOCS1) E3 ubiquitin-protein ligase complex which contains Elongin BC, CUL5, RBX1 and SOCS1. Interacts (via SH2 domain and SOCS box) with TRIM8. Interacts with AXL, CUL2 and FGFR3. Interacts with INSR. Interacts with TRIM8. Interacts with DCUN1D1. Interacts with IFNGR1. In terms of tissue distribution, expressed in all tissues with high expression in spleen, small intestine and peripheral blood leukocytes.

Its subcellular location is the nucleus. The protein resides in the cytoplasmic vesicle. The protein operates within protein modification; protein ubiquitination. Functionally, essential negative regulator of type I and type II interferon (IFN) signaling, as well as that of other cytokines, including IL2, IL4, IL6 and leukemia inhibitory factor (LIF). Downregulates cytokine signaling by inhibiting the JAK/STAT signaling pathway. Acts by binding to JAK proteins and to IFNGR1 and inhibiting their kinase activity. In vitro, suppresses Tec protein-tyrosine activity. Regulates IFN-gamma (IFNG)-mediated sensory neuron survival. Probable substrate recognition component of an ECS (Elongin BC-CUL2/5-SOCS-box protein) E3 ubiquitin ligase complex which mediates the ubiquitination and subsequent proteasomal degradation of target proteins. The sequence is that of Suppressor of cytokine signaling 1 (SOCS1) from Homo sapiens (Human).